The sequence spans 780 residues: Protein SEY1 (780 aa).

Residues 1–680 (MDSKEEAIQL…KRSMIKTTTH (680 aa)) are Cytoplasmic-facing. One can recognise a GB1/RHD3-type G domain in the interval 35–265 (GVNYHVISVF…NEDYYFKPEY (231 aa)). 45-52 (GSQSSGKS) contacts GTP. Positions 440–463 (EVKEEVVKRFENDLKETSDKLRVT) form a coiled coil. Residues 681–701 (IPLWIYAIIVVLGWNEFMMVI) form a helical membrane-spanning segment. Topologically, residues 702–704 (RNP) are lumenal. A helical transmembrane segment spans residues 705-725 (LFVTLTILILVSFYFINKFDL). The Cytoplasmic portion of the chain corresponds to 726 to 780 (WGPVKSVAQTAAGETIGTIKTKLRDFVLEEHEKTPKIQSEKSNSDSEKVVENEKS). A disordered region spans residues 756-780 (HEKTPKIQSEKSNSDSEKVVENEKS).

This sequence belongs to the TRAFAC class dynamin-like GTPase superfamily. GB1/RHD3 GTPase family. RHD3 subfamily.

It is found in the endoplasmic reticulum membrane. Its function is as follows. Cooperates with the reticulon proteins and tubule-shaping DP1 family proteins to generate and maintain the structure of the tubular endoplasmic reticulum network. Has GTPase activity, which is required for its function in ER organization. In Vanderwaltozyma polyspora (strain ATCC 22028 / DSM 70294 / BCRC 21397 / CBS 2163 / NBRC 10782 / NRRL Y-8283 / UCD 57-17) (Kluyveromyces polysporus), this protein is Protein SEY1.